The primary structure comprises 349 residues: UDP-N-acetylenolpyruvoylglucosamine reductase (349 aa).

Residues 24–197 (FGIAATARFA…VSVTFRLPKQ (174 aa)) enclose the FAD-binding PCMH-type domain. Arg-173 is a catalytic residue. The active-site Proton donor is the Ser-249. Glu-345 is a catalytic residue.

Belongs to the MurB family. The cofactor is FAD.

It localises to the cytoplasm. The catalysed reaction is UDP-N-acetyl-alpha-D-muramate + NADP(+) = UDP-N-acetyl-3-O-(1-carboxyvinyl)-alpha-D-glucosamine + NADPH + H(+). Its pathway is cell wall biogenesis; peptidoglycan biosynthesis. Its function is as follows. Cell wall formation. The sequence is that of UDP-N-acetylenolpyruvoylglucosamine reductase from Burkholderia lata (strain ATCC 17760 / DSM 23089 / LMG 22485 / NCIMB 9086 / R18194 / 383).